Here is a 910-residue protein sequence, read N- to C-terminus: Dimethylsulfide dehydrogenase subunit alpha (910 aa).

The tat-type signal signal peptide spans 1–28; sequence MLRTTRRTLMQGASLVGAGLFAAGRGWA. A 4Fe-4S Mo/W bis-MGD-type domain is found at 59 to 123; sequence DYVGKAAHCI…IHSTSMYEAD (65 aa). [4Fe-4S] cluster contacts are provided by H66, C70, C74, and C109.

This sequence belongs to the prokaryotic molybdopterin-containing oxidoreductase family. As to quaternary structure, heterotrimer of alpha, beta and gamma subunits. The cofactor is [4Fe-4S] cluster. Mo-bis(molybdopterin guanine dinucleotide) is required as a cofactor. In terms of processing, predicted to be exported by the Tat system. The position of the signal peptide cleavage has been experimentally proven.

The protein localises to the periplasm. The catalysed reaction is 2 Fe(III)-[cytochrome c2] + dimethyl sulfide + H2O = 2 Fe(II)-[cytochrome c2] + dimethyl sulfoxide + 2 H(+). Its function is as follows. Allows photoautotrophic growth on dimethyl sulfide (DMS) as the sole electron donor. This Rhodovulum sulfidophilum (Rhodobacter sulfidophilus) protein is Dimethylsulfide dehydrogenase subunit alpha (ddhA).